Here is a 353-residue protein sequence, read N- to C-terminus: Paraxanthine methyltransferase 2 (353 aa).

An S-adenosyl-L-methionine-binding site is contributed by Y18. Substrate contacts are provided by residues Y18 and 21–25; that span reads QSSYQ. S-adenosyl-L-methionine-binding positions include G59, 59–60, N65, 99–102, 128–130, and 145–147; these read GC, FNDL, SFF, and SYA. Position 146–150 (146–150) interacts with substrate; it reads YAFLF. N167, D252, and F254 together coordinate Mg(2+). Substrate contacts are provided by S301 and Y306.

The protein belongs to the methyltransferase superfamily. SABATH family. As to quaternary structure, homodimer. The cofactor is Mg(2+).

The polypeptide is Paraxanthine methyltransferase 2 (Arabidopsis thaliana (Mouse-ear cress)).